The following is a 626-amino-acid chain: Kinesin-like protein Klp59C (626 aa).

Residues 1-183 (MDKLSIEQKI…VRSGTTNERI (183 aa)) form a globular region. Residues 68 to 155 (CSGGNAASAN…GKNEDPGNPN (88 aa)) form a disordered region. The segment covering 72-96 (NAASANQTASISPRSMKQRIATGSL) has biased composition (polar residues). The segment covering 101–112 (ATAPPRQQTAPP) has biased composition (low complexity). The segment covering 113–150 (VREDEVVHQAERMRKERERRREAQARTRLDREQGKNED) has biased composition (basic and acidic residues). Residues 115–150 (EDEVVHQAERMRKERERRREAQARTRLDREQGKNED) are a coiled coil. Residues 187–521 (QIMVCVRKRP…LRYADRVKEL (335 aa)) form the Kinesin motor domain. 277 to 284 (GQTGSGKT) serves as a coordination point for ATP. A disordered region spans residues 557-608 (ASSTSMPGGGNQAQQHTNTANDLNRSQKPTSKPTYPTSGQQLVQRKGSSQRE).

This sequence belongs to the TRAFAC class myosin-kinesin ATPase superfamily. Kinesin family. MCAK/KIF2 subfamily.

The protein localises to the chromosome. It is found in the centromere. It localises to the kinetochore. The protein resides in the cytoplasm. Its subcellular location is the cytoskeleton. The protein localises to the spindle pole. Its function is as follows. Required during anaphase to drive sister chromatid separation to actively depolymerize kinetochore microtubules at their kinetochore-associated plus ends, thereby contributing to chromatid mobility through a 'Pac-man' mechanism. The protein is Kinesin-like protein Klp59C (Klp59C) of Drosophila melanogaster (Fruit fly).